The chain runs to 131 residues: Small ribosomal subunit protein uS11 (131 aa).

This sequence belongs to the universal ribosomal protein uS11 family. Part of the 30S ribosomal subunit. Interacts with proteins S7 and S18. Binds to IF-3.

Functionally, located on the platform of the 30S subunit, it bridges several disparate RNA helices of the 16S rRNA. Forms part of the Shine-Dalgarno cleft in the 70S ribosome. The polypeptide is Small ribosomal subunit protein uS11 (Helicobacter pylori (strain P12)).